The following is a 711-amino-acid chain: Ecdysone-inducible protein E75 (711 aa).

Residues 44–120 (TVLCRVCGDK…VGMSRDAVRF (77 aa)) constitute a DNA-binding region (nuclear receptor). NR C4-type zinc fingers lie at residues 47–67 (CRVC…CEGC) and 84–108 (CTKN…LKKC). The region spanning 153–400 (DGPRLLARVV…QQMWVEDEGA (248 aa)) is the NR LBD domain. Disordered regions lie at residues 405 to 432 (SGAD…DCGT), 466 to 530 (LTVT…DMPV), 559 to 602 (AMRR…PIRA), and 680 to 711 (DAPQ…MLPA). Basic and acidic residues-rich tracts occupy residues 511–521 (SLEEHSDDRRP) and 560–572 (MRRD…EARP). The segment covering 574 to 590 (RPTPSPQPPHHPHPASP) has biased composition (pro residues). 2 stretches are compositionally biased toward low complexity: residues 591 to 602 (AHPAHSPRPIRA) and 682 to 692 (PQPLNLSKKSP). Positions 693 to 711 (SPSPPPPPPRSYMPPMLPA) are enriched in pro residues.

This sequence belongs to the nuclear hormone receptor family. NR1 subfamily.

The protein localises to the nucleus. Functionally, orphan receptor possibly involved in the regulation of genes in the ecdysteroid cascade. In Galleria mellonella (Greater wax moth), this protein is Ecdysone-inducible protein E75 (E75).